Here is a 160-residue protein sequence, read N- to C-terminus: 2-C-methyl-D-erythritol 2,4-cyclodiphosphate synthase (160 aa).

The a divalent metal cation site is built by D11 and H13. Residues 11–13 (DIH) and 37–38 (HS) contribute to the 4-CDP-2-C-methyl-D-erythritol 2-phosphate site. H45 serves as a coordination point for a divalent metal cation. Residues 59–61 (DIG), 135–138 (TTNE), and R145 contribute to the 4-CDP-2-C-methyl-D-erythritol 2-phosphate site.

The protein belongs to the IspF family. In terms of assembly, homotrimer. A divalent metal cation serves as cofactor.

The catalysed reaction is 4-CDP-2-C-methyl-D-erythritol 2-phosphate = 2-C-methyl-D-erythritol 2,4-cyclic diphosphate + CMP. It functions in the pathway isoprenoid biosynthesis; isopentenyl diphosphate biosynthesis via DXP pathway; isopentenyl diphosphate from 1-deoxy-D-xylulose 5-phosphate: step 4/6. Functionally, involved in the biosynthesis of isopentenyl diphosphate (IPP) and dimethylallyl diphosphate (DMAPP), two major building blocks of isoprenoid compounds. Catalyzes the conversion of 4-diphosphocytidyl-2-C-methyl-D-erythritol 2-phosphate (CDP-ME2P) to 2-C-methyl-D-erythritol 2,4-cyclodiphosphate (ME-CPP) with a corresponding release of cytidine 5-monophosphate (CMP). The sequence is that of 2-C-methyl-D-erythritol 2,4-cyclodiphosphate synthase from Nostoc punctiforme (strain ATCC 29133 / PCC 73102).